We begin with the raw amino-acid sequence, 388 residues long: Myosin light chain kinase family member 4 (388 aa).

In terms of domain architecture, Protein kinase spans 106 to 361 (VSKTEILGGG…ASEALKHPWL (256 aa)). Residues 112–120 (LGGGRFGQV) and lysine 135 contribute to the ATP site. Aspartate 227 (proton acceptor) is an active-site residue.

It belongs to the protein kinase superfamily. CAMK Ser/Thr protein kinase family.

The enzyme catalyses L-seryl-[protein] + ATP = O-phospho-L-seryl-[protein] + ADP + H(+). The catalysed reaction is L-threonyl-[protein] + ATP = O-phospho-L-threonyl-[protein] + ADP + H(+). This chain is Myosin light chain kinase family member 4 (MYLK4), found in Homo sapiens (Human).